The chain runs to 338 residues: Large ribosomal subunit protein uL3 (338 aa).

Residues 230 to 253 are disordered; sequence HRKGHRRTGTIGPQAPALMFTQPR.

This sequence belongs to the universal ribosomal protein uL3 family. Part of the 50S ribosomal subunit. Forms a cluster with proteins L14 and L24e.

In terms of biological role, one of the primary rRNA binding proteins, it binds directly near the 3'-end of the 23S rRNA, where it nucleates assembly of the 50S subunit. The sequence is that of Large ribosomal subunit protein uL3 from Pyrobaculum neutrophilum (strain DSM 2338 / JCM 9278 / NBRC 100436 / V24Sta) (Thermoproteus neutrophilus).